Reading from the N-terminus, the 150-residue chain is Putative transmembrane protein DDB_G0277665 (150 aa).

The next 2 membrane-spanning stretches (helical) occupy residues 4-24 (TLII…FNIL) and 42-62 (VIVG…FLPL).

Its subcellular location is the membrane. The polypeptide is Putative transmembrane protein DDB_G0277665 (Dictyostelium discoideum (Social amoeba)).